A 367-amino-acid polypeptide reads, in one-letter code: WAT1-related protein At3g28050 (367 aa).

10 helical membrane-spanning segments follow: residues valine 10–phenylalanine 30, phenylalanine 40–phenylalanine 60, phenylalanine 73–glycine 93, threonine 103–phenylalanine 123, threonine 142–alanine 162, tryptophan 179–valine 199, phenylalanine 211–phenylalanine 231, isoleucine 246–histidine 266, leucine 276–phenylalanine 296, and leucine 301–tryptophan 321. EamA domains follow at residues glycine 25 to threonine 153 and leucine 195 to valine 319. A disordered region spans residues histidine 338–valine 367.

The protein belongs to the drug/metabolite transporter (DMT) superfamily. Plant drug/metabolite exporter (P-DME) (TC 2.A.7.4) family.

Its subcellular location is the membrane. The chain is WAT1-related protein At3g28050 from Arabidopsis thaliana (Mouse-ear cress).